The primary structure comprises 261 residues: Calbindin (261 aa).

An N-acetylalanine modification is found at A2. The interval 2–7 is interaction with RANBP9; that stretch reads AESHLQ. 5 EF-hand domains span residues 11-46, 53-88, 98-133, 142-177, and 186-221; these read ITAS…LQQA, ELSP…EENF, KSCE…LLEK, KLAE…QENF, and MCGK…LCEK. 5 residues coordinate Ca(2+): D24, D26, S28, Y30, and E35. The Ca(2+) site is built by D111, D113, E122, D155, N157, D159, K161, E166, D199, D201, N203, Y205, and E210.

This sequence belongs to the calbindin family. As to quaternary structure, interacts with RANBP9.

Functionally, buffers cytosolic calcium. May stimulate a membrane Ca(2+)-ATPase and a 3',5'-cyclic nucleotide phosphodiesterase. The protein is Calbindin (CALB1) of Pongo abelii (Sumatran orangutan).